A 100-amino-acid chain; its full sequence is Urease subunit gamma (100 aa).

It belongs to the urease gamma subunit family. Heterotrimer of UreA (gamma), UreB (beta) and UreC (alpha) subunits. Three heterotrimers associate to form the active enzyme.

The protein resides in the cytoplasm. It catalyses the reaction urea + 2 H2O + H(+) = hydrogencarbonate + 2 NH4(+). Its pathway is nitrogen metabolism; urea degradation; CO(2) and NH(3) from urea (urease route): step 1/1. This is Urease subunit gamma from Delftia acidovorans (strain DSM 14801 / SPH-1).